Consider the following 483-residue polypeptide: SWI/SNF-related matrix-associated actin-dependent regulator of chromatin subfamily D member 3 (483 aa).

N-acetylalanine is present on A2. Positions 26-102 (VRPGMPSGAR…ARSRSAKRRK (77 aa)) are disordered. Low complexity predominate over residues 78–87 (QSQAQSQGQP). S178 bears the Phosphoserine mark. The SWIB/MDM2 domain occupies 258-335 (YQPPQFKLDP…PQRLTALLLP (78 aa)).

Belongs to the SMARCD family. Component of the multiprotein chromatin-remodeling complexes SWI/SNF: SWI/SNF-A (BAF), SWI/SNF-B (PBAF) and related complexes. The canonical complex contains a catalytic subunit (either SMARCA4/BRG1/BAF190A or SMARCA2/BRM/BAF190B) and at least SMARCE1, ACTL6A/BAF53, SMARCC1/BAF155, SMARCC2/BAF170, and SMARCB1/SNF5/BAF47. Other subunits specific to each of the complexes may also be present permitting several possible combinations developmentally and tissue specific. Component of the BAF complex, which includes at least actin (ACTB), ARID1A/BAF250A, ARID1B/BAF250B, SMARCA2/BRM, SMARCA4/BRG1/BAF190A, ACTL6A/BAF53, ACTL6B/BAF53B, SMARCE1/BAF57, SMARCC1/BAF155, SMARCC2/BAF170, SMARCB1/SNF5/INI1, and one or more SMARCD1/BAF60A, SMARCD2/BAF60B, or SMARCD3/BAF60C. In muscle cells, the BAF complex also contains DPF3. Component of neural progenitors-specific chromatin remodeling complex (npBAF complex) composed of at least, ARID1A/BAF250A or ARID1B/BAF250B, SMARCD1/BAF60A, SMARCD3/BAF60C, SMARCA2/BRM/BAF190B, SMARCA4/BRG1/BAF190A, SMARCB1/BAF47, SMARCC1/BAF155, SMARCE1/BAF57, SMARCC2/BAF170, PHF10/BAF45A, ACTL6A/BAF53A and actin. Component of neuron-specific chromatin remodeling complex (nBAF complex) composed of at least, ARID1A/BAF250A or ARID1B/BAF250B, SMARCD1/BAF60A, SMARCD3/BAF60C, SMARCA2/BRM/BAF190B, SMARCA4/BRG1/BAF190A, SMARCB1/BAF47, SMARCC1/BAF155, SMARCE1/BAF57, SMARCC2/BAF170, DPF1/BAF45B, DPF3/BAF45C, ACTL6B/BAF53B and actin. May be a component of the SWI/SNF-B (PBAF) chromatin remodeling complex, at least composed of SMARCA4/BRG1, SMARCB1/BAF47/SNF5, ACTL6A/BAF53A or ACTL6B/BAF53B, SMARCE1/BAF57, SMARCD1/BAF60A, SMARCD2/BAF60B, perhaps SMARCD3/BAF60C, SMARCC1/BAF155, SMARCC2/BAF170, PBRM1/BAF180, ARID2/BAF200 and actin. Interacts with SMARCA4/BRG1/BAF190A. Component of SWI/SNF (GBAF) subcomplex, which includes at least BICRA or BICRAL (mutually exclusive), BRD9, SS18, SMARCA2/BRM, SMARCA4/BRG1/BAF190A, ACTL6A/BAF53, SMARCC1/BAF155, and SMARCD1/BAF60A. The precise distribution of the related SMARCD1, SMARCD2 and SMARCD3 proteins among these and other SWI/SNF nucleosome-remodeling complexes is not fully known. May allow recruitment of SWI/SNF containing complexes specifically to promoters where these factors are located. Also interacts with several nuclear receptors including PPARG/NR1C3, RXRA/NR1F1, ESR1, NR5A1, NR5A2/LRH1 and other transcriptional activators including the HLH protein SREBF1/SREBP1 and the homeobox protein PBX1. Interacts with PRDM1/BLIMP1. As to expression, isoform 2 and isoform 1 are expressed in brain, heart, kidney, placenta, prostate, salivary gland, spleen, testis, thyroid, trachea and uterus. Isoform 1 is also expressed in skeletal muscle and adipose tissue.

It localises to the nucleus. Its function is as follows. Involved in transcriptional activation and repression of select genes by chromatin remodeling (alteration of DNA-nucleosome topology). Component of SWI/SNF chromatin remodeling complexes that carry out key enzymatic activities, changing chromatin structure by altering DNA-histone contacts within a nucleosome in an ATP-dependent manner. Stimulates nuclear receptor mediated transcription. Belongs to the neural progenitors-specific chromatin remodeling complex (npBAF complex) and the neuron-specific chromatin remodeling complex (nBAF complex). During neural development a switch from a stem/progenitor to a postmitotic chromatin remodeling mechanism occurs as neurons exit the cell cycle and become committed to their adult state. The transition from proliferating neural stem/progenitor cells to postmitotic neurons requires a switch in subunit composition of the npBAF and nBAF complexes. As neural progenitors exit mitosis and differentiate into neurons, npBAF complexes which contain ACTL6A/BAF53A and PHF10/BAF45A, are exchanged for homologous alternative ACTL6B/BAF53B and DPF1/BAF45B or DPF3/BAF45C subunits in neuron-specific complexes (nBAF). The npBAF complex is essential for the self-renewal/proliferative capacity of the multipotent neural stem cells. The nBAF complex along with CREST plays a role regulating the activity of genes essential for dendrite growth. This is SWI/SNF-related matrix-associated actin-dependent regulator of chromatin subfamily D member 3 (SMARCD3) from Homo sapiens (Human).